The chain runs to 274 residues: 2-dehydro-3-deoxyphosphooctonate aldolase (274 aa).

The protein belongs to the KdsA family.

Its subcellular location is the cytoplasm. The catalysed reaction is D-arabinose 5-phosphate + phosphoenolpyruvate + H2O = 3-deoxy-alpha-D-manno-2-octulosonate-8-phosphate + phosphate. Its pathway is carbohydrate biosynthesis; 3-deoxy-D-manno-octulosonate biosynthesis; 3-deoxy-D-manno-octulosonate from D-ribulose 5-phosphate: step 2/3. It functions in the pathway bacterial outer membrane biogenesis; lipopolysaccharide biosynthesis. This is 2-dehydro-3-deoxyphosphooctonate aldolase from Legionella pneumophila (strain Lens).